A 459-amino-acid polypeptide reads, in one-letter code: MEDDRAQVDLGIAADIDEMNPPPPPSVQQKQPKKRFLGRQSAAAGKSSSSSSNSTSQPAGANTSIEDSGAIQVAQPRRAPRMLNQVPDSILHDAALNEAIALLPSNYSFEIHKTIHRIRTLDAKRVALQMPEGLLLFATTISDILTQFCPGIETLIMGDVTYGACCIDDYTARAMGCDLLVHYAHSCLIPVDVTKIKTLYVFVDISIDTSHLLATLERNFAPGKSIAMVGTIQFNATIHGVRSTLQKAGYEVIIPQIAPLSKGEILGCTSPNLSQFLTSSGKQVDMILYLGDGRFHLESIMIHNPSIPAYRYDPYSRKLTHETYGHEEMQDVRRSAIRQAKTAKKWGLILGSLGRQGNPNTLGLIEEKLKANGTPFVNFCLSEIFPGKLAMMSDVECWVQVACPRLSIDWGYAFPRPLLTPYEALIALEEKEDWGKGAYPMDYYGREGLGRTKPAAMEV.

Residues 1–68 form a disordered region; that stretch reads MEDDRAQVDL…AGANTSIEDS (68 aa). Over residues 41-61 the composition is skewed to low complexity; sequence SAAAGKSSSSSSNSTSQPAGA. [4Fe-4S] cluster contacts are provided by Cys-165, Cys-268, and Cys-403.

It belongs to the DPH1/DPH2 family. DPH1 subfamily. In terms of assembly, component of the 2-(3-amino-3-carboxypropyl)histidine synthase complex composed of dph-1, dph-2, dph-3 and a NADH-dependent reductase, predominantly cbr-1. [4Fe-4S] cluster is required as a cofactor.

It is found in the cytoplasm. The catalysed reaction is L-histidyl-[translation elongation factor 2] + S-adenosyl-L-methionine = 2-[(3S)-amino-3-carboxypropyl]-L-histidyl-[translation elongation factor 2] + S-methyl-5'-thioadenosine + H(+). Its pathway is protein modification; peptidyl-diphthamide biosynthesis. Catalyzes the first step of diphthamide biosynthesis, a post-translational modification of histidine which occurs in elongation factor 2. Dph-1 and dph-2 transfer a 3-amino-3-carboxypropyl (ACP) group from S-adenosyl-L-methionine (SAM) to a histidine residue, the reaction is assisted by a reduction system comprising dph-3 and a NADH-dependent reductase, predominantly cbr-1. This chain is 2-(3-amino-3-carboxypropyl)histidine synthase subunit 1 (dph-1), found in Neurospora crassa (strain ATCC 24698 / 74-OR23-1A / CBS 708.71 / DSM 1257 / FGSC 987).